Here is a 715-residue protein sequence, read N- to C-terminus: MTTTSAFMLNVRLDNVAVVAIDVPGEKVNTLKAEFAAQVRAILKQIRENKALQGVVFISAKADNFIAGADINMIGHCQNAQEAETLARQGQQLMAEIQALPVPVIAAIHGACLGGGLEMALACHRRICTDDVKTVLGLPEVQLGLLPGSGGTQRLPRLVGVSTALDMILTGKQLRARQALRAGLVDDVVPQTILLEAAVELAKKERLAQRTLPVRERILAGPLGRALLFRLVRKKTAQKTQGNYPATERIIDVIETGLAQGSSSGYDAEARAFGELAMTPQSQALRAIFFASTEVKKDPGSDAPPGPLNSVGILGGGLMGGGIAWVTACKGGLPVRIKDINTQGINHALKYSWDLLETKVRRRHIKASERDKQLALISGSTDYRGFSHRDLVIEAVFEDLPLKQQMVAEVEQNCAAHTIFASNTSSLPIGDIAANAARPEQVIGLHFFSPVEKMPLVEVIPHASTSAQTIATTVKLAKKQGKTPIVVSDKAGFYVNRILAPYINEAIRMLTEGERVEHIDAALVKFGFPVGPIQLLDEVGIDTGTKIIPVLEAAYGERFSAPANVVASILNDDRKGRKNGRGFYLYGEKGRKSKKQVDPAIYKLIGVQGQSRLSAQQVADRCVMLMLNEAARCFDEKVIRSARDGDIGAVFGIGFPPFLGGPFRYMDALGPGEMVATLQRLAALYGPRYAPCEQLVRMAERREHFWTNGETDQGN.

Residues 1 to 190 (MTTTSAFMLN…RAGLVDDVVP (190 aa)) form an enoyl-CoA hydratase region. The segment at 306–715 (GPLNSVGILG…WTNGETDQGN (410 aa)) is 3-hydroxyacyl-CoA dehydrogenase.

In the N-terminal section; belongs to the enoyl-CoA hydratase/isomerase family. It in the central section; belongs to the 3-hydroxyacyl-CoA dehydrogenase family. Heterotetramer of two alpha chains (FadJ) and two beta chains (FadI).

It localises to the cytoplasm. It carries out the reaction a (3S)-3-hydroxyacyl-CoA = a (2E)-enoyl-CoA + H2O. It catalyses the reaction a 4-saturated-(3S)-3-hydroxyacyl-CoA = a (3E)-enoyl-CoA + H2O. The catalysed reaction is a (3S)-3-hydroxyacyl-CoA + NAD(+) = a 3-oxoacyl-CoA + NADH + H(+). The enzyme catalyses (3S)-3-hydroxybutanoyl-CoA = (3R)-3-hydroxybutanoyl-CoA. The protein operates within lipid metabolism; fatty acid beta-oxidation. Catalyzes the formation of a hydroxyacyl-CoA by addition of water on enoyl-CoA. Also exhibits 3-hydroxyacyl-CoA epimerase and 3-hydroxyacyl-CoA dehydrogenase activities. The chain is Fatty acid oxidation complex subunit alpha from Salmonella schwarzengrund (strain CVM19633).